The following is a 224-amino-acid chain: 7-cyano-7-deazaguanine synthase (224 aa).

8–18 (LSGGMDSAAVI) is a binding site for ATP. Residues C186, C196, C199, and C202 each coordinate Zn(2+).

Belongs to the QueC family. Zn(2+) serves as cofactor.

It carries out the reaction 7-carboxy-7-deazaguanine + NH4(+) + ATP = 7-cyano-7-deazaguanine + ADP + phosphate + H2O + H(+). It participates in purine metabolism; 7-cyano-7-deazaguanine biosynthesis. Its function is as follows. Catalyzes the ATP-dependent conversion of 7-carboxy-7-deazaguanine (CDG) to 7-cyano-7-deazaguanine (preQ(0)). This chain is 7-cyano-7-deazaguanine synthase, found in Xanthomonas campestris pv. campestris (strain 8004).